The chain runs to 285 residues: Eukaryotic translation initiation factor 3 subunit F-2 (285 aa).

In terms of domain architecture, MPN spans 11 to 145; it reads VFLKPLVLFQ…TRLYCAVEMG (135 aa).

The protein belongs to the eIF-3 subunit F family. In terms of assembly, component of the eukaryotic translation initiation factor 3 (eIF-3) complex. The eIF-3 complex interacts with pix.

The protein localises to the cytoplasm. Its function is as follows. Component of the eukaryotic translation initiation factor 3 (eIF-3) complex, which is involved in protein synthesis of a specialized repertoire of mRNAs and, together with other initiation factors, stimulates binding of mRNA and methionyl-tRNAi to the 40S ribosome. The eIF-3 complex specifically targets and initiates translation of a subset of mRNAs involved in cell proliferation. This is Eukaryotic translation initiation factor 3 subunit F-2 from Drosophila simulans (Fruit fly).